Consider the following 344-residue polypeptide: Arginine N-succinyltransferase (344 aa).

Leucine 125 is a succinyl-CoA binding site. The active-site Proton donor is the histidine 229.

Belongs to the arginine N-succinyltransferase family.

The enzyme catalyses succinyl-CoA + L-arginine = N(2)-succinyl-L-arginine + CoA + H(+). It functions in the pathway amino-acid degradation; L-arginine degradation via AST pathway; L-glutamate and succinate from L-arginine: step 1/5. Functionally, catalyzes the transfer of succinyl-CoA to arginine to produce N(2)-succinylarginine. The protein is Arginine N-succinyltransferase of Escherichia coli O157:H7.